The following is a 393-amino-acid chain: S-adenosylmethionine synthase 2 (393 aa).

Residue E9 coordinates Mg(2+). Position 15 (H15) interacts with ATP. Residue E43 participates in K(+) binding. Residues E56 and Q99 each contribute to the L-methionine site. ATP contacts are provided by residues 167-169 (DGK), 235-238 (SGRF), D246, 252-253 (RK), A269, K273, and K277. Residue D246 coordinates L-methionine. K277 provides a ligand contact to L-methionine.

It belongs to the AdoMet synthase family. Homotetramer. It depends on Mn(2+) as a cofactor. Mg(2+) serves as cofactor. Co(2+) is required as a cofactor. The cofactor is K(+).

It is found in the cytoplasm. It carries out the reaction L-methionine + ATP + H2O = S-adenosyl-L-methionine + phosphate + diphosphate. Its pathway is amino-acid biosynthesis; S-adenosyl-L-methionine biosynthesis; S-adenosyl-L-methionine from L-methionine: step 1/1. In terms of biological role, catalyzes the formation of S-adenosylmethionine from methionine and ATP. The reaction comprises two steps that are both catalyzed by the same enzyme: formation of S-adenosylmethionine (AdoMet) and triphosphate, and subsequent hydrolysis of the triphosphate. This chain is S-adenosylmethionine synthase 2 (SAMS2), found in Elaeagnus umbellata (Autumn olive).